The chain runs to 270 residues: L-fucose dehydrogenase (270 aa).

Residues Arg19, Ile21, Asp40, Lys41, Asp62, Val63, Asn89, Tyr154, Lys158, Ile187, Thr189, and Leu191 each contribute to the NAD(+) site. Tyr154 acts as the Proton acceptor in catalysis.

Belongs to the short-chain dehydrogenases/reductases (SDR) family. In terms of assembly, homotetramer. As to expression, highly expressed in brain, placenta, liver and kidney.

Its subcellular location is the cytoplasm. It catalyses the reaction L-fucose + NAD(+) = L-fucono-1,5-lactone + NADH + H(+). It carries out the reaction D-arabinose + NAD(+) = D-arabinono-1,5-lactone + NADH + H(+). The enzyme catalyses L-galactose + NAD(+) = L-galactono-1,5-lactone + NADH + H(+). It participates in carbohydrate degradation; L-fucose degradation. In terms of biological role, catalyzes the NAD(+)-dependent oxidation of L-fucose, yielding L-fucono-1,5-lactone, which rapidly converts spontaneously to L-fucone-1,4-lactone. Can also act on D-arabinose and L-galactose, with lower catalytic efficiency. Does not use NADPH. May be the initial enzyme of the L-fucose degradation pathway in mammals. This is L-fucose dehydrogenase from Homo sapiens (Human).